Reading from the N-terminus, the 322-residue chain is Cysteine protease YopT (322 aa).

Catalysis depends on residues C139, H258, and D274.

The protein belongs to the peptidase C58 family. In terms of assembly, interacts with human ARHA.

The protein localises to the secreted. Functionally, cysteine protease, which is translocated into infected cells and plays a central role in pathogenesis by cleaving the C-terminus end of the human small GTPase RhoA/ARHA, a regulator of cytoskeleton. Once cleaved, ARHA loses its lipid modification, and is released from the cell membrane, leading to the subsequent disruption of actin cytoskeleton of the host cell. This Yersinia pestis protein is Cysteine protease YopT (yopT).